The following is a 366-amino-acid chain: UDP-N-acetylenolpyruvoylglucosamine reductase (366 aa).

Residues valine 29–serine 203 enclose the FAD-binding PCMH-type domain. Residue arginine 177 is part of the active site. Serine 258 (proton donor) is an active-site residue. Glutamate 358 is an active-site residue.

Belongs to the MurB family. FAD serves as cofactor.

Its subcellular location is the cytoplasm. It carries out the reaction UDP-N-acetyl-alpha-D-muramate + NADP(+) = UDP-N-acetyl-3-O-(1-carboxyvinyl)-alpha-D-glucosamine + NADPH + H(+). It participates in cell wall biogenesis; peptidoglycan biosynthesis. Cell wall formation. The chain is UDP-N-acetylenolpyruvoylglucosamine reductase from Mycobacterium ulcerans (strain Agy99).